The sequence spans 275 residues: Peptidoglycan-N-acetylglucosamine deacetylase BC_1960 (275 aa).

In terms of domain architecture, NodB homology spans Ala81–Val262. Residue Asp88 is the Proton acceptor of the active site. Asp89, His139, and His143 together coordinate Zn(2+). Pro179 carries the post-translational modification 2-hydroxyproline; partial. The Proton donor role is filled by His233.

This sequence belongs to the polysaccharide deacetylase family. The cofactor is Zn(2+). In terms of processing, hydroxylated on Pro-179. Hydroxylation alters the active site and enhances significantly deacetylase activity, probably by creating a more favorable environment for transition-state stabilization. It might be autocatalytic.

It carries out the reaction peptidoglycan-N-acetyl-D-glucosamine + H2O = peptidoglycan-D-glucosamine + acetate.. With respect to regulation, deacetylase activity is stimulated by hydroxylation on Pro-179. Inhibited by CuCl(2) and ZnCl(2). Inhibited by the hydroxamate N-hydroxy-4-(naphthalene-1-yl)benzamide (NHNB). Its function is as follows. Catalyzes the deacetylation of N-acetylglucosamine (GlcNAc) residues in peptidoglycan. Also acts on soluble chitin substrates and N-acetylchitooligomers. Acts on cell wall peptidoglycan from the Gram-positive bacteria B.cereus and B.subtilis and the Gram-negative bacterium H.pylori. Not active on acetylated xylan. This is Peptidoglycan-N-acetylglucosamine deacetylase BC_1960 from Bacillus cereus (strain ATCC 14579 / DSM 31 / CCUG 7414 / JCM 2152 / NBRC 15305 / NCIMB 9373 / NCTC 2599 / NRRL B-3711).